Consider the following 264-residue polypeptide: Glutamate racemase (264 aa).

Residues 10–11 and 42–43 contribute to the substrate site; these read DS and YG. The active-site Proton donor/acceptor is the cysteine 73. 74–75 serves as a coordination point for substrate; the sequence is NT. The active-site Proton donor/acceptor is cysteine 183. Position 184 to 185 (184 to 185) interacts with substrate; it reads TH.

Belongs to the aspartate/glutamate racemases family.

It carries out the reaction L-glutamate = D-glutamate. The protein operates within cell wall biogenesis; peptidoglycan biosynthesis. Functionally, provides the (R)-glutamate required for cell wall biosynthesis. The polypeptide is Glutamate racemase (Streptococcus pyogenes serotype M6 (strain ATCC BAA-946 / MGAS10394)).